Reading from the N-terminus, the 829-residue chain is Cadherin-16 (829 aa).

A signal peptide spans 1-18; the sequence is MVPAWLWLLCFSVPQALV. The Extracellular segment spans residues 19 to 786; sequence EVSPTTLHVE…MKGMPTKLSA (768 aa). 6 Cadherin domains span residues 25–126, 131–235, 242–336, 341–449, 455–564, and 569–665; these read LHVE…VPQF, YSAR…SIVE, EPVH…APVC, PPVS…APEF, GPVS…PPRL, and YEAD…APAL. Asn-517, Asn-602, and Asn-722 each carry an N-linked (GlcNAc...) asparagine glycan. The segment at 666–786 is ectodomain G; the sequence is PLAPMPSRHL…MKGMPTKLSA (121 aa). Residues 787–807 form a helical membrane-spanning segment; the sequence is VGILVGTLAAIGFFLILIFTH. Topologically, residues 808 to 829 are cytoplasmic; that stretch reads LALARKKDLDAPADNVPLKAAA.

As to expression, kidney specific. Limited to the basolateral membranes of renal tubular epithelial cells.

The protein resides in the cell membrane. Cadherins are calcium-dependent cell adhesion proteins. They preferentially interact with themselves in a homophilic manner in connecting cells; cadherins may thus contribute to the sorting of heterogeneous cell types. This is Cadherin-16 (CDH16) from Oryctolagus cuniculus (Rabbit).